The chain runs to 1350 residues: ABC transporter C family member 13 (1350 aa).

The ABC transmembrane type-1 1 domain maps to 107–390; the sequence is NKKSIFIVIL…LPEAIHNLLG (284 aa). Helical transmembrane passes span 111 to 131, 143 to 163, 215 to 235, and 240 to 260; these read IFIV…LKYF, TFLT…SYTL, IGLF…FPIQ, and LALL…VMII. Residues 462-481 form a disordered region; it reads EKSEEEYETTTTTTDDNNNN. A compositionally biased stretch (low complexity) spans 470-481; the sequence is TTTTTTDDNNNN. The ABC transporter 1 domain maps to 473 to 693; that stretch reads TTTDDNNNNN…IDFESIMKTK (221 aa). 505–512 contacts ATP; the sequence is GVVGSGKT. Positions 774–1061 constitute an ABC transmembrane type-1 2 domain; the sequence is KHGSSTFFFI…FVELEVKMNS (288 aa). 6 consecutive transmembrane segments (helical) span residues 776-796, 816-836, 887-907, 909-929, 1003-1023, and 1029-1049; these read GSST…QAIF, DSFY…TLVI, IDLL…TVVF, ICVM…LIIV, IGVR…FFSL, and GFSV…NWAV. Positions 1103–1337 constitute an ABC transporter 2 domain; sequence IEFRDVEIRY…KNSKFSKLVK (235 aa). ATP is bound at residue 1137 to 1144; it reads GRTGAGKS.

This sequence belongs to the ABC transporter superfamily. ABCC family. Conjugate transporter (TC 3.A.1.208) subfamily.

It is found in the membrane. The sequence is that of ABC transporter C family member 13 (abcC13) from Dictyostelium discoideum (Social amoeba).